We begin with the raw amino-acid sequence, 150 residues long: MSMSTTTEVIAHYWAFAVFLIGALGLCSLMLLGARYLGGRAQARAKHVPYESGLDSVGSARLRMSAKFYLVAMFFVIFDVEALFLYAWAVSVREVGWLGFIEAAVFIAILLAGLFYLVRIGALNWTPVRSRRETAGKSHVRLTSGKHPQQ.

Transmembrane regions (helical) follow at residues 14–34 (WAFAVFLIGALGLCSLMLLGA), 70–90 (LVAMFFVIFDVEALFLYAWAV), and 98–118 (LGFIEAAVFIAILLAGLFYLV).

It belongs to the complex I subunit 3 family. In terms of assembly, NDH-1 is composed of 13 different subunits. Subunits NuoA, H, J, K, L, M, N constitute the membrane sector of the complex.

It localises to the cell inner membrane. The enzyme catalyses a quinone + NADH + 5 H(+)(in) = a quinol + NAD(+) + 4 H(+)(out). NDH-1 shuttles electrons from NADH, via FMN and iron-sulfur (Fe-S) centers, to quinones in the respiratory chain. The immediate electron acceptor for the enzyme in this species is believed to be ubiquinone. Couples the redox reaction to proton translocation (for every two electrons transferred, four hydrogen ions are translocated across the cytoplasmic membrane), and thus conserves the redox energy in a proton gradient. This chain is NADH-quinone oxidoreductase subunit A, found in Proteus mirabilis (strain HI4320).